Consider the following 992-residue polypeptide: UvrABC system protein A (992 aa).

A compositionally biased stretch (polar residues) spans 1–11 (MPKNSSTTVSS). The disordered stretch occupies residues 1–30 (MPKNSSTTVSSAVEAHAGGLASGPGGARSG). An ATP-binding site is contributed by 62 to 69 (GLSGSGKS). Residues 302-330 (CPNGHEQTVDEIEPRSFSFNNPFGACPEC) form a C4-type; atypical zinc finger. ABC transporter domains are found at residues 360–639 (WSLG…TRSV) and 659–988 (PEKG…RFLA). 692–699 (GVSGSGKS) is an ATP binding site. The C4-type zinc finger occupies 791-817 (CEACAGDGTLKIEMNFLPDVYVPCEVC).

It belongs to the ABC transporter superfamily. UvrA family. As to quaternary structure, forms a heterotetramer with UvrB during the search for lesions.

It is found in the cytoplasm. In terms of biological role, the UvrABC repair system catalyzes the recognition and processing of DNA lesions. UvrA is an ATPase and a DNA-binding protein. A damage recognition complex composed of 2 UvrA and 2 UvrB subunits scans DNA for abnormalities. When the presence of a lesion has been verified by UvrB, the UvrA molecules dissociate. In Micrococcus luteus (Micrococcus lysodeikticus), this protein is UvrABC system protein A.